We begin with the raw amino-acid sequence, 129 residues long: Glycine cleavage system H protein (129 aa).

A Lipoyl-binding domain is found at 24–106 (TYTVGITEHA…YAGGWIFKIK (83 aa)). Lys65 is modified (N6-lipoyllysine).

It belongs to the GcvH family. In terms of assembly, the glycine cleavage system is composed of four proteins: P, T, L and H. (R)-lipoate serves as cofactor.

Functionally, the glycine cleavage system catalyzes the degradation of glycine. The H protein shuttles the methylamine group of glycine from the P protein to the T protein. The polypeptide is Glycine cleavage system H protein (Escherichia coli O127:H6 (strain E2348/69 / EPEC)).